Here is a 745-residue protein sequence, read N- to C-terminus: Copper-transporting ATPase (745 aa).

Residues 1 to 67 (MKESFYIEGM…LIEKLGYSPK (67 aa)) form the HMA domain. The Cytoplasmic segment spans residues 1–83 (MKESFYIEGM…KKEFFSPNVK (83 aa)). The Cu cation site is built by C12 and C15. A helical membrane pass occupies residues 84-104 (LALAVIFTLFVVYLSMGAMLS). Residues 105-124 (PSLLPKSLLAIDNHSNFLNA) are Extracellular-facing. Residues 125-144 (CLQLIGTLIVMHWGRDFYIQ) traverse the membrane as a helical segment. Residues 145-151 (GFKALWH) lie on the Cytoplasmic side of the membrane. The chain crosses the membrane as a helical span at residues 152 to 172 (RQPNMSSLIAIGTSAALISSL). The Extracellular segment spans residues 173-194 (WQLYLVYTDHYTDQWSYGHYYF). A helical transmembrane segment spans residues 195–215 (ESVCVILMFVMVGKRIENVSK). The Cytoplasmic portion of the chain corresponds to 216-343 (DKALDAMQAL…KAEISRLADK (128 aa)). Residues 344-366 (VSSVFVPSVIAIAILAFVVWLII) form a helical membrane-spanning segment. Residues 367 to 379 (APKPDFWWNFGIA) lie on the Extracellular side of the membrane. Residues 380–397 (LEVFVSVLVISCPCALGL) form a helical membrane-spanning segment. Residues 398-685 (ATLMSILVAN…KLSQATIKNI (288 aa)) lie on the Cytoplasmic side of the membrane. D435 serves as the catalytic 4-aspartylphosphate intermediate. Residues D631 and D635 each coordinate Mg(2+). The helical transmembrane segment at 686–705 (KENLFWAFCYNSVFIPLACG) threads the bilayer. At 706-716 (VLYKANIMLSP) the chain is on the extracellular side. A helical transmembrane segment spans residues 717 to 735 (AIAGLAMSLSSVSVVLNSQ). The Cytoplasmic portion of the chain corresponds to 736 to 745 (RLRNFKIKDH).

It belongs to the cation transport ATPase (P-type) (TC 3.A.3) family. Type IB subfamily.

It is found in the cell membrane. The enzyme catalyses Cu(2+)(in) + ATP + H2O = Cu(2+)(out) + ADP + phosphate + H(+). In terms of biological role, probably involved in copper export. The sequence is that of Copper-transporting ATPase (copA) from Helicobacter pylori (Campylobacter pylori).